Here is a 260-residue protein sequence, read N- to C-terminus: Methyl-coenzyme M reductase I subunit gamma (260 aa).

Residue R123 participates in coenzyme M binding.

The protein belongs to the methyl-coenzyme M reductase gamma subunit family. As to quaternary structure, MCR is a hexamer of two alpha, two beta, and two gamma chains, forming a dimer of heterotrimers. The cofactor is coenzyme F430.

It is found in the cytoplasm. The enzyme catalyses coenzyme B + methyl-coenzyme M = methane + coenzyme M-coenzyme B heterodisulfide. It participates in one-carbon metabolism; methyl-coenzyme M reduction; methane from methyl-coenzyme M: step 1/1. Its function is as follows. Component of the methyl-coenzyme M reductase (MCR) I that catalyzes the reductive cleavage of methyl-coenzyme M (CoM-S-CH3 or 2-(methylthio)ethanesulfonate) using coenzyme B (CoB or 7-mercaptoheptanoylthreonine phosphate) as reductant which results in the production of methane and the mixed heterodisulfide of CoB and CoM (CoM-S-S-CoB). This is the final step in methanogenesis. This is Methyl-coenzyme M reductase I subunit gamma (mcrG) from Methanocaldococcus jannaschii (strain ATCC 43067 / DSM 2661 / JAL-1 / JCM 10045 / NBRC 100440) (Methanococcus jannaschii).